The sequence spans 314 residues: Methionyl-tRNA formyltransferase (314 aa).

A (6S)-5,6,7,8-tetrahydrofolate-binding site is contributed by 111-114 (SLLP).

This sequence belongs to the Fmt family.

The catalysed reaction is L-methionyl-tRNA(fMet) + (6R)-10-formyltetrahydrofolate = N-formyl-L-methionyl-tRNA(fMet) + (6S)-5,6,7,8-tetrahydrofolate + H(+). In terms of biological role, attaches a formyl group to the free amino group of methionyl-tRNA(fMet). The formyl group appears to play a dual role in the initiator identity of N-formylmethionyl-tRNA by promoting its recognition by IF2 and preventing the misappropriation of this tRNA by the elongation apparatus. This is Methionyl-tRNA formyltransferase from Chlorobium luteolum (strain DSM 273 / BCRC 81028 / 2530) (Pelodictyon luteolum).